Reading from the N-terminus, the 466-residue chain is Triplex capsid protein 1 (466 aa).

The interval 1–29 (MKTKPLPTAPMAWAESAVETTTSPRELAG) is disordered.

The protein belongs to the herpesviridae TRX1 protein family. As to quaternary structure, interacts with TRX2, MCP and capsid vertex component 2/CVC2.

The protein resides in the virion. Its subcellular location is the host nucleus. Functionally, structural component of the T=16 icosahedral capsid. The capsid is composed of pentamers and hexamers of major capsid protein/MCP, which are linked together by heterotrimers called triplexes. These triplexes are formed by a single molecule of triplex protein 1/TRX1 and two copies of triplex protein 2/TRX2. Additionally, TRX1 is required for efficient transport of TRX2 to the nucleus, which is the site of capsid assembly. This chain is Triplex capsid protein 1, found in Homo sapiens (Human).